The primary structure comprises 186 residues: Ribosome maturation factor RimM (186 aa).

Positions 100-182 (NEGEYHVSDL…RIEINPPVGL (83 aa)) constitute a PRC barrel domain.

It belongs to the RimM family. As to quaternary structure, binds ribosomal protein uS19.

It is found in the cytoplasm. Its function is as follows. An accessory protein needed during the final step in the assembly of 30S ribosomal subunit, possibly for assembly of the head region. Essential for efficient processing of 16S rRNA. May be needed both before and after RbfA during the maturation of 16S rRNA. It has affinity for free ribosomal 30S subunits but not for 70S ribosomes. The sequence is that of Ribosome maturation factor RimM from Rippkaea orientalis (strain PCC 8801 / RF-1) (Cyanothece sp. (strain PCC 8801)).